A 217-amino-acid chain; its full sequence is Large ribosomal subunit protein eL6 (217 aa).

It belongs to the eukaryotic ribosomal protein eL6 family. As to quaternary structure, component of the large ribosomal subunit. May bind IPO9 with low affinity.

The protein resides in the cytoplasm. It is found in the cytosol. Its subcellular location is the rough endoplasmic reticulum. In terms of biological role, component of the large ribosomal subunit. The polypeptide is Large ribosomal subunit protein eL6 (rpl-6) (Caenorhabditis elegans).